The sequence spans 198 residues: Transmembrane protein 9B (198 aa).

The signal sequence occupies residues 1–33 (MATLWGGLLRLGSLLSLSCLALSVLLLAQLSDA). Residue Asn60 is glycosylated (N-linked (GlcNAc...) asparagine). The helical transmembrane segment at 105–125 (IIIYLSILGLLLLYMVYLTLV) threads the bilayer. Phosphoserine occurs at positions 142 and 189.

It belongs to the TMEM9 family. In terms of processing, N-glycosylated.

Its subcellular location is the lysosome membrane. The protein resides in the early endosome membrane. In terms of biological role, enhances production of pro-inflammatory cytokines induced by TNF, IL1B, and TLR ligands. Has a role in TNF activation of both the NF-kappaB and MAPK pathways. This Homo sapiens (Human) protein is Transmembrane protein 9B (TMEM9B).